We begin with the raw amino-acid sequence, 126 residues long: Holo-[acyl-carrier-protein] synthase (126 aa).

Mg(2+) contacts are provided by Asp9 and Glu58.

The protein belongs to the P-Pant transferase superfamily. AcpS family. Mg(2+) is required as a cofactor.

The protein resides in the cytoplasm. It carries out the reaction apo-[ACP] + CoA = holo-[ACP] + adenosine 3',5'-bisphosphate + H(+). Its function is as follows. Transfers the 4'-phosphopantetheine moiety from coenzyme A to a Ser of acyl-carrier-protein. The protein is Holo-[acyl-carrier-protein] synthase of Buchnera aphidicola subsp. Acyrthosiphon pisum (strain APS) (Acyrthosiphon pisum symbiotic bacterium).